The following is a 447-amino-acid chain: Probable arabinosyltransferase ARAD1 (447 aa).

At 1-6 (MARKSS) the chain is on the cytoplasmic side. The chain crosses the membrane as a helical; Signal-anchor for type II membrane protein span at residues 7–29 (LLKRAAIAVVSVIAIYVILNASV). At 30-447 (SRSLPSSSDL…TNQTGLITSI (418 aa)) the chain is on the lumenal side. The span at 32–41 (SLPSSSDLPR) shows a compositional bias: low complexity. Residues 32 to 52 (SLPSSSDLPRQLIREDDDDEG) are disordered. 3 N-linked (GlcNAc...) asparagine glycosylation sites follow: Asn-427, Asn-432, and Asn-439.

It belongs to the glycosyltransferase 47 family. Homodimer and heterodimer with ARAD2. Expressed in root vasculature, cotyledons, leaves, stems, vascular tissue of sepals, petals and stamens, pollen grains, mature siliques and abscission region of seeds.

It is found in the golgi apparatus membrane. Its function is as follows. Probable arabinosyl transferase responsible for the polymerization of arabinose into the arabinan of arabinogalactan. May function as inverting enzyme using UDP-beta-L-arabinopyranoside. May be important for arabinan side chains of rhamnogalacturonan I (RG-I), a major component of pectins. Cell wall pectic arabinans are involved in thigmomorphogenesis response of inflorescence stems to mechanical stress. This chain is Probable arabinosyltransferase ARAD1 (ARAD1), found in Arabidopsis thaliana (Mouse-ear cress).